The primary structure comprises 321 residues: Sideroflexin-3 (321 aa).

Met-1 is subject to N-acetylmethionine. The next 4 helical transmembrane spans lie at 146–164 (LGTAYVSATTGAVATALGL), 174–194 (LVGRFVPFAAVAAANCINIPL), 225–245 (IFQVVVSRIGMAIPAMAIPPV), and 266–286 (LQVGLVGFCLVFATPLCCALF).

This sequence belongs to the sideroflexin family.

The protein localises to the mitochondrion membrane. The catalysed reaction is L-serine(in) = L-serine(out). Its function is as follows. Mitochondrial serine transporter that mediates transport of serine into mitochondria, an important step of the one-carbon metabolism pathway. Mitochondrial serine is converted to glycine and formate, which then exits to the cytosol where it is used to generate the charged folates that serve as one-carbon donors. The chain is Sideroflexin-3 (Sfxn3) from Rattus norvegicus (Rat).